We begin with the raw amino-acid sequence, 158 residues long: 2-C-methyl-D-erythritol 2,4-cyclodiphosphate synthase (158 aa).

Positions 9 and 11 each coordinate a divalent metal cation. 4-CDP-2-C-methyl-D-erythritol 2-phosphate contacts are provided by residues aspartate 9–histidine 11 and histidine 35–serine 36. Histidine 43 is a binding site for a divalent metal cation. 4-CDP-2-C-methyl-D-erythritol 2-phosphate is bound by residues aspartate 57–glycine 59, phenylalanine 62–aspartate 66, alanine 101–alanine 107, threonine 133–glutamate 136, phenylalanine 140, and arginine 143.

This sequence belongs to the IspF family. In terms of assembly, homotrimer. The cofactor is a divalent metal cation.

It catalyses the reaction 4-CDP-2-C-methyl-D-erythritol 2-phosphate = 2-C-methyl-D-erythritol 2,4-cyclic diphosphate + CMP. Its pathway is isoprenoid biosynthesis; isopentenyl diphosphate biosynthesis via DXP pathway; isopentenyl diphosphate from 1-deoxy-D-xylulose 5-phosphate: step 4/6. Involved in the biosynthesis of isopentenyl diphosphate (IPP) and dimethylallyl diphosphate (DMAPP), two major building blocks of isoprenoid compounds. Catalyzes the conversion of 4-diphosphocytidyl-2-C-methyl-D-erythritol 2-phosphate (CDP-ME2P) to 2-C-methyl-D-erythritol 2,4-cyclodiphosphate (ME-CPP) with a corresponding release of cytidine 5-monophosphate (CMP). The sequence is that of 2-C-methyl-D-erythritol 2,4-cyclodiphosphate synthase from Vibrio vulnificus (strain CMCP6).